The sequence spans 115 residues: UPF0102 protein NMCC_2054 (115 aa).

It belongs to the UPF0102 family.

This is UPF0102 protein NMCC_2054 from Neisseria meningitidis serogroup C (strain 053442).